The following is a 260-amino-acid chain: Acetylglutamate kinase (260 aa).

Substrate contacts are provided by residues 46–47, Arg-68, and Asn-160; that span reads GG.

Belongs to the acetylglutamate kinase family. ArgB subfamily.

The protein localises to the cytoplasm. The enzyme catalyses N-acetyl-L-glutamate + ATP = N-acetyl-L-glutamyl 5-phosphate + ADP. It participates in amino-acid biosynthesis; L-arginine biosynthesis; N(2)-acetyl-L-ornithine from L-glutamate: step 2/4. Catalyzes the ATP-dependent phosphorylation of N-acetyl-L-glutamate. This is Acetylglutamate kinase from Shewanella sp. (strain MR-7).